The chain runs to 367 residues: MSVNRILVINPGSTSTKIGVFDNERPVLEETIRHDTGEIKKYKRIIDQYEFRKETILEILHSHGINISKLSAVCGRGGLLRPIEGGTYTVNEAMLEDLKNGYSGHHASNLGGILAYEIASGLNIPAFIVDPVVVDEMEPIARISGIAGMERKSIFHALNQKAVARKVAAEIGHKYEDLNLIIAHMGGGITVGAHKNGKVIDVNNGLNGEGPFSPERAGTVPVGQLIEMCFSGNYYRDEMMKKIVGQGGLVSLIGTNDAIKVENMVEKGDPEATLIYKAMAYQVAKEIGGASAVLHGKIDAIVLTGGLAYSKILINEIKERVNWIADVIVHPGEDELQALAEGALRVLREEEAPKEYVVREKETVARG.

Belongs to the acetokinase family.

It is found in the cytoplasm. It catalyses the reaction butanoate + ATP = butanoyl phosphate + ADP. In Bacillus cytotoxicus (strain DSM 22905 / CIP 110041 / 391-98 / NVH 391-98), this protein is Probable butyrate kinase.